The sequence spans 154 residues: Endoribonuclease YbeY (154 aa).

His116, His120, and His126 together coordinate Zn(2+).

This sequence belongs to the endoribonuclease YbeY family. Zn(2+) is required as a cofactor.

The protein localises to the cytoplasm. Single strand-specific metallo-endoribonuclease involved in late-stage 70S ribosome quality control and in maturation of the 3' terminus of the 16S rRNA. The sequence is that of Endoribonuclease YbeY from Buchnera aphidicola subsp. Baizongia pistaciae (strain Bp).